A 460-amino-acid polypeptide reads, in one-letter code: Putative type II methyltransferase M.OihORF3336P (460 aa).

Positions 15–458 (PEVVDLFSGC…EAMKKNIQGG (444 aa)) constitute an SAM-dependent MTase C5-type domain. Residue Cys-97 is part of the active site.

This sequence belongs to the class I-like SAM-binding methyltransferase superfamily. C5-methyltransferase family.

It carries out the reaction a 2'-deoxycytidine in DNA + S-adenosyl-L-methionine = a 5-methyl-2'-deoxycytidine in DNA + S-adenosyl-L-homocysteine + H(+). In terms of biological role, a methylase, recognizes the double-stranded sequence 5'-ACCGGT-3', methylates C-? on both strands. No endonuclease has been identified for this methylase. The chain is Putative type II methyltransferase M.OihORF3336P from Oceanobacillus iheyensis (strain DSM 14371 / CIP 107618 / JCM 11309 / KCTC 3954 / HTE831).